We begin with the raw amino-acid sequence, 307 residues long: tRNA dimethylallyltransferase (307 aa).

Residue 11–18 (GPTGSGKT) participates in ATP binding. 13–18 (TGSGKT) lines the substrate pocket. An interaction with substrate tRNA region spans residues 36 to 39 (DSVA).

Belongs to the IPP transferase family. Monomer. Requires Mg(2+) as cofactor.

The enzyme catalyses adenosine(37) in tRNA + dimethylallyl diphosphate = N(6)-dimethylallyladenosine(37) in tRNA + diphosphate. Its function is as follows. Catalyzes the transfer of a dimethylallyl group onto the adenine at position 37 in tRNAs that read codons beginning with uridine, leading to the formation of N6-(dimethylallyl)adenosine (i(6)A). This is tRNA dimethylallyltransferase from Koribacter versatilis (strain Ellin345).